A 106-amino-acid chain; its full sequence is uncharacterized protein (106 aa).

This is an uncharacterized protein from Schizosaccharomyces pombe (strain 972 / ATCC 24843) (Fission yeast).